The sequence spans 193 residues: Large ribosomal subunit protein uL5 (193 aa).

This sequence belongs to the universal ribosomal protein uL5 family. In terms of assembly, part of the 50S ribosomal subunit; part of the 5S rRNA/L5/L18/L25 subcomplex. Contacts the 5S rRNA and the P site tRNA. Forms a bridge to the 30S subunit in the 70S ribosome.

This is one of the proteins that bind and probably mediate the attachment of the 5S RNA into the large ribosomal subunit, where it forms part of the central protuberance. In the 70S ribosome it contacts protein S13 of the 30S subunit (bridge B1b), connecting the 2 subunits; this bridge is implicated in subunit movement. Contacts the P site tRNA; the 5S rRNA and some of its associated proteins might help stabilize positioning of ribosome-bound tRNAs. In Rhizorhabdus wittichii (strain DSM 6014 / CCUG 31198 / JCM 15750 / NBRC 105917 / EY 4224 / RW1) (Sphingomonas wittichii), this protein is Large ribosomal subunit protein uL5.